We begin with the raw amino-acid sequence, 389 residues long: Protein DDI1 homolog 1 (389 aa).

Positions Ser-109–Met-132 are disordered. Asp-261 is a catalytic residue.

The protein belongs to the DDI1 family. Expressed in most tissues.

It is found in the cytoplasm. Its subcellular location is the nucleus. Functionally, aspartic protease. Required for the cleavage and activation of transcription factors such as isoform a of the transcription factor skn-1, which in turn regulates the expression of proteasomal subunits such as rpt-3. Plays a key role in the degradation of the potassium channel slo-1, perhaps acting directly, in cleaving slo-1 upstream of the ER-associated degradation pathway (ERAD), and also indirectly, via activation of the transcription factor skn-1, which mediates proteasomal homeostasis. This chain is Protein DDI1 homolog 1, found in Caenorhabditis elegans.